The chain runs to 973 residues: Coatomer subunit beta (973 aa).

HEAT repeat units lie at residues His-98–Glu-133 and Leu-134–His-170. Residue Ser-181 is modified to Phosphoserine. HEAT repeat units lie at residues Asn-279 to Gly-317 and Ala-318 to Ala-354. The residue at position 540 (Ser-540) is a Phosphoserine.

As to quaternary structure, oligomeric complex that consists of at least the alpha, beta, beta', gamma, delta, epsilon and zeta subunits. The complex interacts with ARF1 and PAB1. Post-translationally, the N-terminus is blocked.

The protein resides in the cytoplasm. Its subcellular location is the golgi apparatus membrane. The protein localises to the cytoplasmic vesicle. It localises to the COPI-coated vesicle membrane. Its function is as follows. The coatomer is a cytosolic protein complex that binds to dilysine motifs and reversibly associates with Golgi non-clathrin-coated vesicles, which further mediate biosynthetic protein transport from the ER, via the Golgi up to the trans Golgi network. Coatomer complex is required for budding from Golgi membranes, and is essential for the retrograde Golgi-to-ER transport of dilysine-tagged proteins. Required for mitochondrial morphology. The polypeptide is Coatomer subunit beta (SEC26) (Saccharomyces cerevisiae (strain ATCC 204508 / S288c) (Baker's yeast)).